Here is a 79-residue protein sequence, read N- to C-terminus: NAD(P)H-quinone oxidoreductase subunit L (79 aa).

A run of 2 helical transmembrane segments spans residues isoleucine 10–valine 30 and glycine 48–leucine 68.

It belongs to the complex I NdhL subunit family. As to quaternary structure, NDH-1 can be composed of about 15 different subunits; different subcomplexes with different compositions have been identified which probably have different functions.

It localises to the cellular thylakoid membrane. It carries out the reaction a plastoquinone + NADH + (n+1) H(+)(in) = a plastoquinol + NAD(+) + n H(+)(out). The enzyme catalyses a plastoquinone + NADPH + (n+1) H(+)(in) = a plastoquinol + NADP(+) + n H(+)(out). In terms of biological role, NDH-1 shuttles electrons from an unknown electron donor, via FMN and iron-sulfur (Fe-S) centers, to quinones in the respiratory and/or the photosynthetic chain. The immediate electron acceptor for the enzyme in this species is believed to be plastoquinone. Couples the redox reaction to proton translocation, and thus conserves the redox energy in a proton gradient. Cyanobacterial NDH-1 also plays a role in inorganic carbon-concentration. This Microcystis aeruginosa (strain NIES-843 / IAM M-2473) protein is NAD(P)H-quinone oxidoreductase subunit L.